Reading from the N-terminus, the 329-residue chain is Phosphate acyltransferase (329 aa).

This sequence belongs to the PlsX family. In terms of assembly, homodimer. Probably interacts with PlsY.

It localises to the cytoplasm. The catalysed reaction is a fatty acyl-[ACP] + phosphate = an acyl phosphate + holo-[ACP]. Its pathway is lipid metabolism; phospholipid metabolism. Its function is as follows. Catalyzes the reversible formation of acyl-phosphate (acyl-PO(4)) from acyl-[acyl-carrier-protein] (acyl-ACP). This enzyme utilizes acyl-ACP as fatty acyl donor, but not acyl-CoA. In Anoxybacillus flavithermus (strain DSM 21510 / WK1), this protein is Phosphate acyltransferase.